Reading from the N-terminus, the 542-residue chain is Major facilitator superfamily transporter mfsA (542 aa).

Transmembrane regions (helical) follow at residues 19–39 (FAAV…AGLL), 70–90 (GAVT…SMFC), 99–119 (LIFM…VCYT), 127–149 (FVIG…PVWQ), 160–180 (FLVC…YWVV), 194–214 (FPVA…LMLP), 321–341 (IMGG…FFMI), 349–369 (LYLI…ACLI), 380–400 (AVGI…LPWI), 413–432 (VGAS…VVMF), and 444–464 (VYLF…FFYV).

The protein belongs to the major facilitator superfamily. Sugar transporter (TC 2.A.1.1) family.

The protein localises to the membrane. Its function is as follows. Major facilitator superfamily transporter that may be involved in A.fumigatus adaptation to azoles such as vorizonazole. The chain is Major facilitator superfamily transporter mfsA from Aspergillus fumigatus (strain ATCC MYA-4609 / CBS 101355 / FGSC A1100 / Af293) (Neosartorya fumigata).